The chain runs to 504 residues: AMP phosphorylase (504 aa).

AMP is bound by residues glycine 169, 195-200 (SRAITS), and threonine 204. Aspartate 257 acts as the Proton donor in catalysis. AMP contacts are provided by serine 265 and lysine 289.

It belongs to the thymidine/pyrimidine-nucleoside phosphorylase family. Type 2 subfamily.

It carries out the reaction AMP + phosphate = alpha-D-ribose 1,5-bisphosphate + adenine. It catalyses the reaction CMP + phosphate = cytosine + alpha-D-ribose 1,5-bisphosphate. The enzyme catalyses UMP + phosphate = alpha-D-ribose 1,5-bisphosphate + uracil. In terms of biological role, catalyzes the conversion of AMP and phosphate to adenine and ribose 1,5-bisphosphate (R15P). Exhibits phosphorylase activity toward CMP and UMP in addition to AMP. Functions in an archaeal AMP degradation pathway, together with R15P isomerase and RubisCO. In Methanococcus aeolicus (strain ATCC BAA-1280 / DSM 17508 / OCM 812 / Nankai-3), this protein is AMP phosphorylase.